The primary structure comprises 371 residues: 4-hydroxy-3-methylbut-2-en-1-yl diphosphate synthase (flavodoxin) (371 aa).

[4Fe-4S] cluster-binding residues include Cys-270, Cys-273, Cys-305, and Glu-312.

Belongs to the IspG family. It depends on [4Fe-4S] cluster as a cofactor.

The catalysed reaction is (2E)-4-hydroxy-3-methylbut-2-enyl diphosphate + oxidized [flavodoxin] + H2O + 2 H(+) = 2-C-methyl-D-erythritol 2,4-cyclic diphosphate + reduced [flavodoxin]. It participates in isoprenoid biosynthesis; isopentenyl diphosphate biosynthesis via DXP pathway; isopentenyl diphosphate from 1-deoxy-D-xylulose 5-phosphate: step 5/6. Functionally, converts 2C-methyl-D-erythritol 2,4-cyclodiphosphate (ME-2,4cPP) into 1-hydroxy-2-methyl-2-(E)-butenyl 4-diphosphate. This chain is 4-hydroxy-3-methylbut-2-en-1-yl diphosphate synthase (flavodoxin), found in Shewanella frigidimarina (strain NCIMB 400).